The primary structure comprises 538 residues: Chaperonin GroEL (538 aa).

ATP is bound by residues 30 to 33 (TLGP), 87 to 91 (DGTTT), Gly415, 479 to 481 (DAA), and Asp495.

Belongs to the chaperonin (HSP60) family. As to quaternary structure, forms a cylinder of 14 subunits composed of two heptameric rings stacked back-to-back. Interacts with the co-chaperonin GroES.

The protein resides in the cytoplasm. It catalyses the reaction ATP + H2O + a folded polypeptide = ADP + phosphate + an unfolded polypeptide.. Together with its co-chaperonin GroES, plays an essential role in assisting protein folding. The GroEL-GroES system forms a nano-cage that allows encapsulation of the non-native substrate proteins and provides a physical environment optimized to promote and accelerate protein folding. This is Chaperonin GroEL from Dictyoglomus turgidum (strain DSM 6724 / Z-1310).